The primary structure comprises 225 residues: Phosphoribosylformylglycinamidine synthase subunit PurQ (225 aa).

The Glutamine amidotransferase type-1 domain occupies 4–225; it reads RIGVITFPGT…LSVLDTLVTA (222 aa). Catalysis depends on Cys87, which acts as the Nucleophile. Residues His196 and Glu198 contribute to the active site.

In terms of assembly, part of the FGAM synthase complex composed of 1 PurL, 1 PurQ and 2 PurS subunits.

Its subcellular location is the cytoplasm. The catalysed reaction is N(2)-formyl-N(1)-(5-phospho-beta-D-ribosyl)glycinamide + L-glutamine + ATP + H2O = 2-formamido-N(1)-(5-O-phospho-beta-D-ribosyl)acetamidine + L-glutamate + ADP + phosphate + H(+). The enzyme catalyses L-glutamine + H2O = L-glutamate + NH4(+). The protein operates within purine metabolism; IMP biosynthesis via de novo pathway; 5-amino-1-(5-phospho-D-ribosyl)imidazole from N(2)-formyl-N(1)-(5-phospho-D-ribosyl)glycinamide: step 1/2. Its function is as follows. Part of the phosphoribosylformylglycinamidine synthase complex involved in the purines biosynthetic pathway. Catalyzes the ATP-dependent conversion of formylglycinamide ribonucleotide (FGAR) and glutamine to yield formylglycinamidine ribonucleotide (FGAM) and glutamate. The FGAM synthase complex is composed of three subunits. PurQ produces an ammonia molecule by converting glutamine to glutamate. PurL transfers the ammonia molecule to FGAR to form FGAM in an ATP-dependent manner. PurS interacts with PurQ and PurL and is thought to assist in the transfer of the ammonia molecule from PurQ to PurL. This Nocardia farcinica (strain IFM 10152) protein is Phosphoribosylformylglycinamidine synthase subunit PurQ.